A 216-amino-acid chain; its full sequence is Large ribosomal subunit protein uL3 (216 aa).

Glutamine 157 bears the N5-methylglutamine mark.

It belongs to the universal ribosomal protein uL3 family. As to quaternary structure, part of the 50S ribosomal subunit. Forms a cluster with proteins L14 and L19. Post-translationally, methylated by PrmB.

One of the primary rRNA binding proteins, it binds directly near the 3'-end of the 23S rRNA, where it nucleates assembly of the 50S subunit. The protein is Large ribosomal subunit protein uL3 of Xanthomonas axonopodis pv. citri (strain 306).